Reading from the N-terminus, the 319-residue chain is ATP-dependent 6-phosphofructokinase (319 aa).

ATP is bound at residue G11. 21-25 contributes to the ADP binding site; sequence RAVVR. ATP contacts are provided by residues 72-73 and 102-105; these read RC and GDGS. Residue D103 coordinates Mg(2+). 125–127 contributes to the substrate binding site; that stretch reads TID. D127 (proton acceptor) is an active-site residue. R154 is a binding site for ADP. Substrate contacts are provided by residues R162 and 169-171; that span reads MGR. ADP-binding positions include 185 to 187, R211, and 213 to 215; these read GAE and KKH. Residues E222, R243, and 249–252 each bind substrate; that span reads HIQR.

This sequence belongs to the phosphofructokinase type A (PFKA) family. ATP-dependent PFK group I subfamily. Prokaryotic clade 'B1' sub-subfamily. As to quaternary structure, homotetramer. Component of a possible RNA degradosome complex composed of rny, rnjA, rnjB, pnp, pfkA and eno (although rnjA and rnjB's presence is unclear). Specifically interacts with RNase Y (rny, PubMed:21803996) and enolase (eno, PubMed:22198292). Interacts with BrxC. Requires Mg(2+) as cofactor.

The protein resides in the cytoplasm. It carries out the reaction beta-D-fructose 6-phosphate + ATP = beta-D-fructose 1,6-bisphosphate + ADP + H(+). Its pathway is carbohydrate degradation; glycolysis; D-glyceraldehyde 3-phosphate and glycerone phosphate from D-glucose: step 3/4. Its activity is regulated as follows. Allosterically activated by ADP and other diphosphonucleosides, and allosterically inhibited by phosphoenolpyruvate. Its function is as follows. Catalyzes the phosphorylation of D-fructose 6-phosphate to fructose 1,6-bisphosphate by ATP, the first committing step of glycolysis. The chain is ATP-dependent 6-phosphofructokinase from Bacillus subtilis (strain 168).